The chain runs to 398 residues: S-adenosylmethionine synthase (398 aa).

His17 lines the ATP pocket. Asp19 is a Mg(2+) binding site. Glu45 provides a ligand contact to K(+). L-methionine-binding residues include Glu58 and Gln101. A flexible loop region spans residues Gln101–Lys111. ATP is bound by residues Asp176–Lys178, Arg243–Phe244, Asp252, Arg258–Lys259, and Lys279. Residue Asp252 coordinates L-methionine. Lys283 is a binding site for L-methionine.

Belongs to the AdoMet synthase family. Homotetramer; dimer of dimers. Requires Mg(2+) as cofactor. K(+) is required as a cofactor.

The protein resides in the cytoplasm. The enzyme catalyses L-methionine + ATP + H2O = S-adenosyl-L-methionine + phosphate + diphosphate. Its pathway is amino-acid biosynthesis; S-adenosyl-L-methionine biosynthesis; S-adenosyl-L-methionine from L-methionine: step 1/1. Catalyzes the formation of S-adenosylmethionine (AdoMet) from methionine and ATP. The overall synthetic reaction is composed of two sequential steps, AdoMet formation and the subsequent tripolyphosphate hydrolysis which occurs prior to release of AdoMet from the enzyme. The chain is S-adenosylmethionine synthase from Staphylococcus aureus (strain Mu3 / ATCC 700698).